Here is a 62-residue protein sequence, read N- to C-terminus: Large ribosomal subunit protein bL28 (62 aa).

It belongs to the bacterial ribosomal protein bL28 family.

In Helicobacter pylori (strain P12), this protein is Large ribosomal subunit protein bL28.